A 470-amino-acid chain; its full sequence is ATP synthase subunit beta (470 aa).

An ATP-binding site is contributed by 157–164 (GGAGVGKT).

Belongs to the ATPase alpha/beta chains family. As to quaternary structure, F-type ATPases have 2 components, CF(1) - the catalytic core - and CF(0) - the membrane proton channel. CF(1) has five subunits: alpha(3), beta(3), gamma(1), delta(1), epsilon(1). CF(0) has three main subunits: a(1), b(2) and c(9-12). The alpha and beta chains form an alternating ring which encloses part of the gamma chain. CF(1) is attached to CF(0) by a central stalk formed by the gamma and epsilon chains, while a peripheral stalk is formed by the delta and b chains.

It is found in the cell inner membrane. It carries out the reaction ATP + H2O + 4 H(+)(in) = ADP + phosphate + 5 H(+)(out). Its function is as follows. Produces ATP from ADP in the presence of a proton gradient across the membrane. The catalytic sites are hosted primarily by the beta subunits. The polypeptide is ATP synthase subunit beta (Geobacter sulfurreducens (strain ATCC 51573 / DSM 12127 / PCA)).